The primary structure comprises 333 residues: Glyceraldehyde-3-phosphate dehydrogenase (333 aa).

NAD(+) is bound by residues 11 to 12 (RI), aspartate 35, and threonine 121. Residues 151–153 (SCT) and threonine 182 each bind D-glyceraldehyde 3-phosphate. The Nucleophile role is filled by cysteine 152. Asparagine 183 contacts NAD(+). Residues arginine 197, 210 to 211 (TG), and arginine 233 contribute to the D-glyceraldehyde 3-phosphate site. Asparagine 315 contacts NAD(+).

Belongs to the glyceraldehyde-3-phosphate dehydrogenase family. As to quaternary structure, homotetramer.

It is found in the cytoplasm. The enzyme catalyses D-glyceraldehyde 3-phosphate + phosphate + NAD(+) = (2R)-3-phospho-glyceroyl phosphate + NADH + H(+). It participates in carbohydrate degradation; glycolysis; pyruvate from D-glyceraldehyde 3-phosphate: step 1/5. Its function is as follows. Catalyzes the oxidative phosphorylation of glyceraldehyde 3-phosphate (G3P) to 1,3-bisphosphoglycerate (BPG) using the cofactor NAD. The first reaction step involves the formation of a hemiacetal intermediate between G3P and a cysteine residue, and this hemiacetal intermediate is then oxidized to a thioester, with concomitant reduction of NAD to NADH. The reduced NADH is then exchanged with the second NAD, and the thioester is attacked by a nucleophilic inorganic phosphate to produce BPG. This Thermotoga maritima (strain ATCC 43589 / DSM 3109 / JCM 10099 / NBRC 100826 / MSB8) protein is Glyceraldehyde-3-phosphate dehydrogenase (gap).